We begin with the raw amino-acid sequence, 140 residues long: RNA silencing suppressor (140 aa).

The tract at residues 73–76 (RRRR) is basic. 2 consecutive C4-type zinc fingers follow at residues 83 to 98 (CERC…GSKC) and 83 to 103 (CERC…NKTC).

It belongs to the carlaviruses nucleic acid-binding protein family.

In terms of biological role, suppressor of viral-induced RNA silencing. The potential mechanism of action is based on sequestering siRNAs. This chain is RNA silencing suppressor, found in Lily symptomless virus (LSV).